The following is a 50-amino-acid chain: Phospholipase A2 trimorphin (50 aa).

Ca(2+)-binding residues include tyrosine 28, glycine 30, and glycine 32. Residues cysteine 29 and cysteine 45 are joined by a disulfide bond. The active site involves histidine 48. Aspartate 49 is a Ca(2+) binding site.

The cofactor is Ca(2+). As to expression, expressed by the venom gland.

It is found in the secreted. It catalyses the reaction a 1,2-diacyl-sn-glycero-3-phosphocholine + H2O = a 1-acyl-sn-glycero-3-phosphocholine + a fatty acid + H(+). With respect to regulation, inhibited by EDTA. PLA2 catalyzes the calcium-dependent hydrolysis of the 2-acyl groups in 3-sn-phosphoglycerides. The polypeptide is Phospholipase A2 trimorphin (Trimorphodon lambda (Sonoran lyre snake)).